The sequence spans 134 residues: Small ribosomal subunit protein uS11 (134 aa).

Residues 114–134 are disordered; sequence TPVPHNGTRPPRKWFKRQEKR. Over residues 123–134 the composition is skewed to basic residues; that stretch reads PPRKWFKRQEKR.

The protein belongs to the universal ribosomal protein uS11 family. In terms of assembly, part of the 30S ribosomal subunit. Interacts with proteins S7 and S18. Binds to IF-3.

Its function is as follows. Located on the platform of the 30S subunit, it bridges several disparate RNA helices of the 16S rRNA. Forms part of the Shine-Dalgarno cleft in the 70S ribosome. The chain is Small ribosomal subunit protein uS11 from Mesomycoplasma hyopneumoniae (strain J / ATCC 25934 / NCTC 10110) (Mycoplasma hyopneumoniae).